The following is a 644-amino-acid chain: Exoribonuclease 2 (644 aa).

The region spanning 189–516 (RQDLTALNFV…NHRLLKAVIK (328 aa)) is the RNB domain. An S1 motif domain is found at 561 to 643 (NTRFAAEIID…ETRSIIARPA (83 aa)).

This sequence belongs to the RNR ribonuclease family. RNase II subfamily.

The protein resides in the cytoplasm. The catalysed reaction is Exonucleolytic cleavage in the 3'- to 5'-direction to yield nucleoside 5'-phosphates.. Functionally, involved in mRNA degradation. Hydrolyzes single-stranded polyribonucleotides processively in the 3' to 5' direction. This is Exoribonuclease 2 from Salmonella paratyphi B (strain ATCC BAA-1250 / SPB7).